The chain runs to 193 residues: Transcriptional activator GvpE2 (193 aa).

Residue 143-148 (KRKVYR) participates in DNA binding. Positions 153-184 (QAAIEHVDSVVLQLLTFAVGLQTIMADCIVNQ) are leucine-zipper.

As to quaternary structure, homodimer. Interacts with endogenous GvpD, also with GvpD from H.mediterranei.

It is found in the cytoplasm. Degraded once GvpD is translated; degradation requires 'Arg-494' of GvpD; tested in transgenic H.volcanii. Fusion of green fluorescent protein to its C-terminus partially protects it from degradation. Plays a regulatory role in gas vesicle synthesis, required to activate transcription of the c-gvpA operon. Gas vesicles are hollow, gas filled proteinaceous nanostructures found in several microbial planktonic microorganisms. They allow positioning of halobacteria at the optimal depth for growth in the poorly aerated, shallow brine pools of their habitat. In terms of biological role, expression of 2 c-vac DNA fragments containing 2 divergently transcribed regions (gvpE-gvpF-gvpG-gvpH-gvpI-gvpJ-gvpK-gvpL-gvpM and gvpA-gvpC-gvpN-gvpO) allows H.volcanii to produce gas vesicles. All site-directed mutagenesis is tested in H.volcanii. The polypeptide is Transcriptional activator GvpE2 (Halobacterium salinarum (strain ATCC 700922 / JCM 11081 / NRC-1) (Halobacterium halobium)).